The following is a 753-amino-acid chain: Bile salt-activated lipase (753 aa).

An N-terminal signal peptide occupies residues 1–20 (MGRLQLVVLGLTCCWAVASA). Residues 21–121 (AKLGAVYTEG…KQVSRDLPVM (101 aa)) are heparin-binding. Cysteine 84 and cysteine 100 form a disulfide bridge. A glycan (N-linked (GlcNAc...) (complex) asparagine) is linked at asparagine 207. Serine 214 functions as the Acyl-ester intermediate in the catalytic mechanism. A disulfide bridge links cysteine 266 with cysteine 277. Residues aspartate 340 and histidine 455 each act as charge relay system in the active site. A disordered region spans residues 555-753 (QEATPVPPTG…EAQMPAVIRF (199 aa)). O-linked (GalNAc...) threonine glycans are attached at residues threonine 558, threonine 569, and threonine 579. 17 consecutive repeat copies span residues 559-569 (PVPPTGDSEAT), 570-580 (PVPPTGDSETA), 581-591 (PVPPTGDSGAP), 592-602 (PVPPTGDSGAP), 603-613 (PVPPTGDSGAP), 614-624 (PVPPTGDSGAP), 625-635 (PVPPTGDSGAP), 636-646 (PVPPTGDSGAP), 647-657 (PVPPTGDSGAP), 658-668 (PVPPTGDSGAP), 669-679 (PVPPTGDAGPP), 680-690 (PVPPTGDSGAP), 691-701 (PVPPTGDSGAP), 702-712 (PVTPTGDSETA), 713-723 (PVPPTGDSGAP), 724-734 (PVPPTGDSEAA), and 735-745 (PVPPTDDSKEA). The tract at residues 559 to 745 (PVPPTGDSEA…VPPTDDSKEA (187 aa)) is 17 X 11 AA tandem repeats, glycodomain, O-linked (mucin type). Threonine 607, threonine 618, threonine 629, threonine 640, threonine 651, threonine 662, and threonine 673 each carry an O-linked (GalNAc...) threonine glycan. The span at 668 to 683 (PPVPPTGDAGPPPVPP) shows a compositional bias: pro residues.

The protein belongs to the type-B carboxylesterase/lipase family. As to quaternary structure, interacts with CLC. N- and O-glycosylated. In terms of tissue distribution, mammary gland and pancreas. Detected in pancreatic and duodenal juice (at protein level). Expressed by eosinophils.

The protein localises to the secreted. The catalysed reaction is a triacylglycerol + H2O = a diacylglycerol + a fatty acid + H(+). The enzyme catalyses 1,2,3-tri-(9Z-octadecenoyl)-glycerol + H2O = di-(9Z)-octadecenoylglycerol + (9Z)-octadecenoate + H(+). It catalyses the reaction 1,2,3-trioctanoylglycerol + H2O = dioctanoylglycerol + octanoate + H(+). It carries out the reaction a sterol ester + H2O = a sterol + a fatty acid + H(+). The catalysed reaction is cholesteryl (9Z-octadecenoate) + H2O = cholesterol + (9Z)-octadecenoate + H(+). The enzyme catalyses an acetyl ester + H2O = an aliphatic alcohol + acetate + H(+). It catalyses the reaction a butanoate ester + H2O = an aliphatic alcohol + butanoate + H(+). It carries out the reaction 9-hexadecanoyloxy-octadecanoate + H2O = 9-hydroxy-octadecanoate + hexadecanoate + H(+). The catalysed reaction is 9-(9Z-octadecenoyloxy)-octadecanoate + H2O = 9-hydroxy-octadecanoate + (9Z)-octadecenoate + H(+). The enzyme catalyses 1-hexadecanoyl-sn-glycero-3-phosphocholine + H2O = sn-glycerol 3-phosphocholine + hexadecanoate + H(+). It catalyses the reaction 12-hexadecanoyloxy-octadecanoate + H2O = 12-hydroxyoctadecanoate + hexadecanoate + H(+). It carries out the reaction 12-(9Z-octadecenoyloxy)-octadecanoate + H2O = 12-hydroxyoctadecanoate + (9Z)-octadecenoate + H(+). The catalysed reaction is 13-(9Z-octadecenoyloxy)-octadecanoate + H2O = 13-hydroxy-octadecanoate + (9Z)-octadecenoate + H(+). The enzyme catalyses 9-(9Z-hexadecenoyloxy)-octadecanoate + H2O = (9Z)-hexadecenoate + 9-hydroxy-octadecanoate + H(+). It catalyses the reaction 12-(9Z-hexadecenoyloxy)-octadecanoate + H2O = 12-hydroxyoctadecanoate + (9Z)-hexadecenoate + H(+). It carries out the reaction 13-(9Z-hexadecenoyloxy)-octadecanoate + H2O = 13-hydroxy-octadecanoate + (9Z)-hexadecenoate + H(+). The catalysed reaction is 12-octadecanoyloxy-octadecanoate + H2O = 12-hydroxyoctadecanoate + octadecanoate + H(+). The enzyme catalyses 13-octadecanoyloxy-octadecanoate + H2O = 13-hydroxy-octadecanoate + octadecanoate + H(+). It catalyses the reaction 5-(9Z-hexadecenoyloxy)-octadecanoate + H2O = 5-hydroxy-octadecanoate + (9Z)-hexadecenoate + H(+). It carries out the reaction 9-octadecanoyloxy-octadecanoate + H2O = 9-hydroxy-octadecanoate + octadecanoate + H(+). Activated by bile salts such as sodium taurocholate. Catalyzes the hydrolysis of a wide range of substrates including cholesteryl esters, phospholipids, lysophospholipids, di- and tri-acylglycerols, and fatty acid esters of hydroxy fatty acids (FAHFAs). Preferentially hydrolyzes FAHFAs with the ester bond further away from the carboxylate. Unsaturated FAHFAs are hydrolyzed more quickly than saturated FAHFAs. Has an essential role in the complete digestion of dietary lipids and their intestinal absorption, along with the absorption of fat-soluble vitamins. This Homo sapiens (Human) protein is Bile salt-activated lipase (CEL).